The following is a 645-amino-acid chain: Acetyl-coenzyme A synthetase (645 aa).

Residues 190-193 (RGGR), Thr309, and Asn333 contribute to the CoA site. ATP contacts are provided by residues 385 to 387 (GEP), 409 to 414 (DTWWQT), Asp498, and Arg513. Ser521 lines the CoA pocket. Arg524 serves as a coordination point for ATP. Val535, His537, and Val540 together coordinate Mg(2+). CoA is bound at residue Arg582. Residue Lys607 is modified to N6-acetyllysine.

This sequence belongs to the ATP-dependent AMP-binding enzyme family. Mg(2+) is required as a cofactor. In terms of processing, acetylated. Deacetylation by the SIR2-homolog deacetylase activates the enzyme.

It catalyses the reaction acetate + ATP + CoA = acetyl-CoA + AMP + diphosphate. Its function is as follows. Catalyzes the conversion of acetate into acetyl-CoA (AcCoA), an essential intermediate at the junction of anabolic and catabolic pathways. AcsA undergoes a two-step reaction. In the first half reaction, AcsA combines acetate with ATP to form acetyl-adenylate (AcAMP) intermediate. In the second half reaction, it can then transfer the acetyl group from AcAMP to the sulfhydryl group of CoA, forming the product AcCoA. The protein is Acetyl-coenzyme A synthetase of Beijerinckia indica subsp. indica (strain ATCC 9039 / DSM 1715 / NCIMB 8712).